Reading from the N-terminus, the 413-residue chain is Phosphopentomutase (413 aa).

Mn(2+) is bound by residues Asp11, Asp306, His311, Asp347, His348, and His359.

Belongs to the phosphopentomutase family. It depends on Mn(2+) as a cofactor.

The protein localises to the cytoplasm. The enzyme catalyses 2-deoxy-alpha-D-ribose 1-phosphate = 2-deoxy-D-ribose 5-phosphate. The catalysed reaction is alpha-D-ribose 1-phosphate = D-ribose 5-phosphate. The protein operates within carbohydrate degradation; 2-deoxy-D-ribose 1-phosphate degradation; D-glyceraldehyde 3-phosphate and acetaldehyde from 2-deoxy-alpha-D-ribose 1-phosphate: step 1/2. Its function is as follows. Isomerase that catalyzes the conversion of deoxy-ribose 1-phosphate (dRib-1-P) and ribose 1-phosphate (Rib-1-P) to deoxy-ribose 5-phosphate (dRib-5-P) and ribose 5-phosphate (Rib-5-P), respectively. This chain is Phosphopentomutase, found in Helicobacter pylori (strain ATCC 700392 / 26695) (Campylobacter pylori).